The sequence spans 250 residues: ATP synthase subunit a (250 aa).

6 helical membrane passes run 29 to 49, 84 to 104, 114 to 134, 143 to 163, 193 to 213, and 216 to 236; these read ASLF…FATS, FFPL…LGMF, IIVT…YGFY, VFVP…IEII, FVAS…LPLI, and VALT…FAVL.

Belongs to the ATPase A chain family. F-type ATPases have 2 components, CF(1) - the catalytic core - and CF(0) - the membrane proton channel. CF(1) has five subunits: alpha(3), beta(3), gamma(1), delta(1), epsilon(1). CF(0) has three main subunits: a(1), b(2) and c(9-12). The alpha and beta chains form an alternating ring which encloses part of the gamma chain. CF(1) is attached to CF(0) by a central stalk formed by the gamma and epsilon chains, while a peripheral stalk is formed by the delta and b chains.

The protein localises to the cell inner membrane. In terms of biological role, key component of the proton channel; it plays a direct role in the translocation of protons across the membrane. The polypeptide is ATP synthase subunit a (Rhizobium leguminosarum bv. trifolii (strain WSM2304)).